We begin with the raw amino-acid sequence, 241 residues long: Meiotically up-regulated gene 130 protein (241 aa).

Its subcellular location is the mitochondrion. Its function is as follows. Has a role in meiosis. This is Meiotically up-regulated gene 130 protein (mug130) from Schizosaccharomyces pombe (strain 972 / ATCC 24843) (Fission yeast).